The primary structure comprises 184 residues: UPF0669 protein C6orf120 homolog (184 aa).

The signal sequence occupies residues Met-1–Ala-23. An N-linked (GlcNAc...) asparagine glycan is attached at Asn-47.

This sequence belongs to the UPF0669 family.

The protein resides in the secreted. Its function is as follows. May be involved in induction of apoptosis in CD4(+) T-cells, but not CD8(+) T-cells or hepatocytes. In Bos taurus (Bovine), this protein is UPF0669 protein C6orf120 homolog.